The chain runs to 202 residues: Peptidyl-tRNA hydrolase (202 aa).

Tyr-14 contributes to the tRNA binding site. His-19 functions as the Proton acceptor in the catalytic mechanism. Residues Phe-64, Asn-66, and Asn-112 each coordinate tRNA.

The protein belongs to the PTH family. Monomer.

The protein resides in the cytoplasm. The enzyme catalyses an N-acyl-L-alpha-aminoacyl-tRNA + H2O = an N-acyl-L-amino acid + a tRNA + H(+). In terms of biological role, hydrolyzes ribosome-free peptidyl-tRNAs (with 1 or more amino acids incorporated), which drop off the ribosome during protein synthesis, or as a result of ribosome stalling. Its function is as follows. Catalyzes the release of premature peptidyl moieties from peptidyl-tRNA molecules trapped in stalled 50S ribosomal subunits, and thus maintains levels of free tRNAs and 50S ribosomes. This chain is Peptidyl-tRNA hydrolase, found in Methylobacterium radiotolerans (strain ATCC 27329 / DSM 1819 / JCM 2831 / NBRC 15690 / NCIMB 10815 / 0-1).